Reading from the N-terminus, the 299-residue chain is Taste receptor type 2 member 16 (299 aa).

The Extracellular portion of the chain corresponds to 1 to 5 (MVPTQ). Residues 6 to 26 (VTIFSIIMYVLESLVIIVQSC) traverse the membrane as a helical segment. Over 27–44 (TTVAVLFREWMHFQRLSP) the chain is Cytoplasmic. Residues 45 to 65 (VEIILISLGISHFCLQWTSML) traverse the membrane as a helical segment. The Extracellular segment spans residues 66–82 (YNFGTYSRPVLLFWKVS). The chain crosses the membrane as a helical span at residues 83–103 (VVWEFMNVLTFWLTSLLAVLY). The Cytoplasmic segment spans residues 104 to 125 (CVKVSSFSHPVFLWLRLKILKL). Residues 126–146 (VLWLLLGALIASCLSIIPSVV) traverse the membrane as a helical segment. Residues 147 to 183 (KYHIQMELLTLDHLPKNSSLILRLQMFEWYFSNPFKM) lie on the Extracellular side of the membrane. N163 carries N-linked (GlcNAc...) asparagine glycosylation. The chain crosses the membrane as a helical span at residues 184–204 (IGFGVPFLVFLISIILLTVSL). Over 205–233 (VQHWGQMKHYSSSSSSLRAQCTVLKSLAT) the chain is Cytoplasmic. Residues 234–254 (FFIFFTSYFLTIVVSFIGTVF) traverse the membrane as a helical segment. Residues 255–258 (DKKS) lie on the Extracellular side of the membrane. The chain crosses the membrane as a helical span at residues 259-279 (WFWVCEAVIYGLVCIHFTSLM). Over 280–299 (MSNPTLKKALRLQFWSPESS) the chain is Cytoplasmic.

This sequence belongs to the G-protein coupled receptor T2R family. In terms of assembly, interacts with RTP3 and RTP4. Expressed in subsets of taste receptor cells of the tongue and palate epithelium and exclusively in gustducin-positive cells. Expressed in the antrum and fundus (part of the stomach), duodenum and in gastric endocrine cells.

It localises to the cell membrane. Its function is as follows. Gustducin-coupled receptor implicated in the perception of bitter compounds in the oral cavity and the gastrointestinal tract. Signals through PLCB2 and the calcium-regulated cation channel TRPM5. In Rattus norvegicus (Rat), this protein is Taste receptor type 2 member 16 (Tas2r16).